A 292-amino-acid polypeptide reads, in one-letter code: Acetylglutamate kinase (292 aa).

Substrate is bound by residues 62-63 (GG), Arg-84, and Asn-188.

It belongs to the acetylglutamate kinase family. ArgB subfamily.

It is found in the cytoplasm. It carries out the reaction N-acetyl-L-glutamate + ATP = N-acetyl-L-glutamyl 5-phosphate + ADP. It functions in the pathway amino-acid biosynthesis; L-arginine biosynthesis; N(2)-acetyl-L-ornithine from L-glutamate: step 2/4. In terms of biological role, catalyzes the ATP-dependent phosphorylation of N-acetyl-L-glutamate. The protein is Acetylglutamate kinase of Methanosarcina mazei (strain ATCC BAA-159 / DSM 3647 / Goe1 / Go1 / JCM 11833 / OCM 88) (Methanosarcina frisia).